A 77-amino-acid polypeptide reads, in one-letter code: U10-lycotoxin-Ls1b (77 aa).

An N-terminal signal peptide occupies residues 1 to 20 (MKLIIFTGLVLFAIVSLIEA). Residues 21-26 (EEESGR) constitute a propeptide that is removed on maturation.

The protein belongs to the neurotoxin 19 (CSTX) family. 09 (U10-Lctx) subfamily. Contains 4 disulfide bonds. Expressed by the venom gland.

It is found in the secreted. This Lycosa singoriensis (Wolf spider) protein is U10-lycotoxin-Ls1b.